A 574-amino-acid polypeptide reads, in one-letter code: Membrane protein insertase YidC (574 aa).

A helical transmembrane segment spans residues 6 to 26 (VFLIFAWLMVAALLWMEWGKD). The tract at residues 45 to 77 (RDPDAAAPSAANVPSAQPIPQAGAPGTVPATSS) is disordered. The next 5 membrane-spanning stretches (helical) occupy residues 356-376 (FSIMAIIGQGLFWVLSHLHSF), 380-400 (WGWAIIGLVVLLRLALYPLSA), 447-467 (GGCLPLLIQMPIFFALYWVLV), 489-509 (PYFILPLLNISIMWATQKLTP), and 525-545 (PLVFGVMMAFMPAGLVLYWVV).

This sequence belongs to the OXA1/ALB3/YidC family. Type 1 subfamily. In terms of assembly, interacts with the Sec translocase complex via SecD. Specifically interacts with transmembrane segments of nascent integral membrane proteins during membrane integration.

Its subcellular location is the cell inner membrane. Its function is as follows. Required for the insertion and/or proper folding and/or complex formation of integral membrane proteins into the membrane. Involved in integration of membrane proteins that insert both dependently and independently of the Sec translocase complex, as well as at least some lipoproteins. Aids folding of multispanning membrane proteins. The chain is Membrane protein insertase YidC from Xanthomonas euvesicatoria pv. vesicatoria (strain 85-10) (Xanthomonas campestris pv. vesicatoria).